Here is a 143-residue protein sequence, read N- to C-terminus: Protein STIG1 (143 aa).

Residues 1-23 form the signal peptide; the sequence is MDFIILLIAILALSSTPITIISG. Residues 76-87 are sufficient for PI(4)P binding; it reads RTCCFNYFCVDL. A sufficient for binding to the extracellular domain of PRK2 region spans residues 80–83; the sequence is FNYF. The segment at 88-115 is sufficient for PI(3)P binding; that stretch reads FTNRFNCGSCGLVCIVGTRCCGGICVDI.

It belongs to the STIG1 family. In terms of assembly, interacts with PRK1 and PRK2 (via extracellular domain). In terms of tissue distribution, expressed in the stigma and the upper section of the style.

It is found in the secreted. Its subcellular location is the extracellular space. The protein localises to the apoplast. In terms of biological role, promotes pollen tube growth. A C-terminal peptide is cleaved from the propeptide in the stigmatic exudate and represent the major form of STIG1. Binds phosphoinositol lipids. The binding of external phosphatidylinositol 3-phosphate (PI(3)P) and PRK2 by STIG1 induces a rapid intracellular reactive oxygen species elevation. The protein is Protein STIG1 of Solanum lycopersicum (Tomato).